The sequence spans 281 residues: 2-dehydro-3-deoxyphosphooctonate aldolase (281 aa).

The protein belongs to the KdsA family.

Its subcellular location is the cytoplasm. The catalysed reaction is D-arabinose 5-phosphate + phosphoenolpyruvate + H2O = 3-deoxy-alpha-D-manno-2-octulosonate-8-phosphate + phosphate. It functions in the pathway carbohydrate biosynthesis; 3-deoxy-D-manno-octulosonate biosynthesis; 3-deoxy-D-manno-octulosonate from D-ribulose 5-phosphate: step 2/3. Its pathway is bacterial outer membrane biogenesis; lipopolysaccharide biosynthesis. In Pseudomonas aeruginosa (strain UCBPP-PA14), this protein is 2-dehydro-3-deoxyphosphooctonate aldolase.